A 287-amino-acid polypeptide reads, in one-letter code: Gene 31 protein (287 aa).

Residues 13–58 (AGRPAGLPGRGGQPGLAGAEGGEGRAGPGAHGDGVRQGGGLQTGGA) are disordered. The span at 20–58 (PGRGGQPGLAGAEGGEGRAGPGAHGDGVRQGGGLQTGGA) shows a compositional bias: gly residues.

Belongs to the herpesviridae UL92 family.

This chain is Gene 31 protein (31), found in Equine herpesvirus 2 (strain 86/87) (EHV-2).